Here is a 400-residue protein sequence, read N- to C-terminus: Elongation factor Tu (400 aa).

One can recognise a tr-type G domain in the interval 10 to 208 (KPHMNVGTIG…AMDSYFPDPV (199 aa)). The segment at 19 to 26 (GHIDHGKT) is G1. Residue 19-26 (GHIDHGKT) coordinates GTP. T26 serves as a coordination point for Mg(2+). The G2 stretch occupies residues 60 to 64 (GITIN). The interval 81–84 (DCPG) is G3. GTP contacts are provided by residues 81 to 85 (DCPGH) and 136 to 139 (NKVD). Positions 136–139 (NKVD) are G4. The tract at residues 174-176 (SAL) is G5.

The protein belongs to the TRAFAC class translation factor GTPase superfamily. Classic translation factor GTPase family. EF-Tu/EF-1A subfamily. In terms of assembly, monomer.

Its subcellular location is the cytoplasm. The enzyme catalyses GTP + H2O = GDP + phosphate + H(+). Functionally, GTP hydrolase that promotes the GTP-dependent binding of aminoacyl-tRNA to the A-site of ribosomes during protein biosynthesis. The protein is Elongation factor Tu of Fervidobacterium nodosum (strain ATCC 35602 / DSM 5306 / Rt17-B1).